Reading from the N-terminus, the 192-residue chain is RNA-free ribonuclease P (192 aa).

This sequence belongs to the HARP family.

The enzyme catalyses Endonucleolytic cleavage of RNA, removing 5'-extranucleotides from tRNA precursor.. In terms of biological role, RNA-free RNase P that catalyzes the removal of the 5'-leader sequence from pre-tRNA to produce the mature 5'-terminus. The polypeptide is RNA-free ribonuclease P (Alkalilimnicola ehrlichii (strain ATCC BAA-1101 / DSM 17681 / MLHE-1)).